The following is a 439-amino-acid chain: Divalent metal cation transporter MntH 1 (439 aa).

9 helical membrane-spanning segments follow: residues 64-84 (FGYALLFVVVLASFSGMLLQS), 139-161 (LLGVSITTGVVLTAFDTLIVLAL), 171-191 (AIVLGLIATIGACFFVELVLI), 214-234 (PLYLAIGILGATVMPHNLYLH), 262-282 (IGSLSLALLVNAAILILAAAA), 300-320 (LLDPLVGGALASFLFGFALLA), 359-379 (LVPALIGVLWLGEAAVGKLLV), 380-400 (LSQVVLSLQLPFALWPLIRFS), and 418-438 (LAWSLFGLISAANLTLLYFWF).

Belongs to the NRAMP family.

It localises to the cell inner membrane. Functionally, h(+)-stimulated, divalent metal cation uptake system. The polypeptide is Divalent metal cation transporter MntH 1 (Pseudomonas aeruginosa (strain ATCC 15692 / DSM 22644 / CIP 104116 / JCM 14847 / LMG 12228 / 1C / PRS 101 / PAO1)).